A 278-amino-acid chain; its full sequence is uncharacterized protein (278 aa).

Residues 1–32 (MSSASFTTKALSVLAALTAASAPLVAASPAHA) form the signal peptide. In terms of domain architecture, Peptidase S1 spans 33-236 (LANARNVTGS…HAEWIAYYTG (204 aa)). Cys59 and Cys75 are disulfide-bonded. Active-site charge relay system residues include His74, Asp123, and Ser189.

This sequence belongs to the peptidase S1 family.

It localises to the secreted. This is an uncharacterized protein from Corynebacterium glutamicum (strain R).